Consider the following 403-residue polypeptide: Probable tRNA sulfurtransferase (403 aa).

The 106-residue stretch at 60–165 (QLAEERLKPI…KEGVFLSCRT (106 aa)) folds into the THUMP domain. ATP contacts are provided by residues 183–184 (ML), 208–209 (HF), Arg265, Gly287, and Gln296.

Belongs to the ThiI family.

The protein resides in the cytoplasm. The catalysed reaction is [ThiI sulfur-carrier protein]-S-sulfanyl-L-cysteine + a uridine in tRNA + 2 reduced [2Fe-2S]-[ferredoxin] + ATP + H(+) = [ThiI sulfur-carrier protein]-L-cysteine + a 4-thiouridine in tRNA + 2 oxidized [2Fe-2S]-[ferredoxin] + AMP + diphosphate. It carries out the reaction [ThiS sulfur-carrier protein]-C-terminal Gly-Gly-AMP + S-sulfanyl-L-cysteinyl-[cysteine desulfurase] + AH2 = [ThiS sulfur-carrier protein]-C-terminal-Gly-aminoethanethioate + L-cysteinyl-[cysteine desulfurase] + A + AMP + 2 H(+). It participates in cofactor biosynthesis; thiamine diphosphate biosynthesis. Catalyzes the ATP-dependent transfer of a sulfur to tRNA to produce 4-thiouridine in position 8 of tRNAs, which functions as a near-UV photosensor. Also catalyzes the transfer of sulfur to the sulfur carrier protein ThiS, forming ThiS-thiocarboxylate. This is a step in the synthesis of thiazole, in the thiamine biosynthesis pathway. The sulfur is donated as persulfide by IscS. The chain is Probable tRNA sulfurtransferase from Listeria monocytogenes serotype 4a (strain HCC23).